A 571-amino-acid chain; its full sequence is Proline--tRNA ligase (571 aa).

Belongs to the class-II aminoacyl-tRNA synthetase family. ProS type 1 subfamily. As to quaternary structure, homodimer.

The protein localises to the cytoplasm. It catalyses the reaction tRNA(Pro) + L-proline + ATP = L-prolyl-tRNA(Pro) + AMP + diphosphate. In terms of biological role, catalyzes the attachment of proline to tRNA(Pro) in a two-step reaction: proline is first activated by ATP to form Pro-AMP and then transferred to the acceptor end of tRNA(Pro). As ProRS can inadvertently accommodate and process non-cognate amino acids such as alanine and cysteine, to avoid such errors it has two additional distinct editing activities against alanine. One activity is designated as 'pretransfer' editing and involves the tRNA(Pro)-independent hydrolysis of activated Ala-AMP. The other activity is designated 'posttransfer' editing and involves deacylation of mischarged Ala-tRNA(Pro). The misacylated Cys-tRNA(Pro) is not edited by ProRS. This chain is Proline--tRNA ligase, found in Pseudomonas putida (strain W619).